The following is a 60-amino-acid chain: Small ribosomal subunit protein bS21 (60 aa).

Positions 35 to 60 (REHYEKPSVKRKKKSEAARRRKSKVR) are disordered. A compositionally biased stretch (basic residues) spans 43 to 60 (VKRKKKSEAARRRKSKVR).

The protein belongs to the bacterial ribosomal protein bS21 family.

This Clostridium novyi (strain NT) protein is Small ribosomal subunit protein bS21.